A 144-amino-acid chain; its full sequence is Maximins 9/H3 (144 aa).

Positions 1 to 18 (MNFKYIVAVSFLIASAYA) are cleaved as a signal peptide. Positions 19–43 (RSVKNDEQSLSQRDVLEEESLREIR) are excised as a propeptide. Tyrosine amide is present on tyrosine 70. Positions 74 to 123 (TAEEHEVMKRLEAIMRDLDSLDHPEEASERETRGFNQDEIANLFTKKEKR) are excised as a propeptide. Isoleucine 143 is modified (isoleucine amide).

This sequence belongs to the bombinin family. In terms of tissue distribution, expressed by the skin glands.

The protein localises to the secreted. In terms of biological role, maximin-9 shows antimicrobial activity against bacteria and against the fungus C.albicans. It has little hemolytic activity. Its function is as follows. Maximin-H3 shows antibacterial activity against both Gram-positive and Gram-negative bacteria. It also shows antimicrobial activity against the fungus C.albicans. Shows strong hemolytic activity. The protein is Maximins 9/H3 of Bombina maxima (Giant fire-bellied toad).